The primary structure comprises 147 residues: MVHWTDFERSTIKDIFAKIDYDCVGPAAFARCLIVYPWTQRYFGNFGNLFNAAAIIGNPNVAKHGITIMHGLERGVKNLDHLTETYEELSVLHSEKLHVDPDNFKLISDCLTIVVASRLGKAFTGEVQAALQKFLAVVVFSLGKQYH.

The Globin domain maps to 3-147; the sequence is HWTDFERSTI…VVFSLGKQYH (145 aa). Heme b-binding residues include His64 and His93.

It belongs to the globin family. Hb1 is a heterotetramer of two alpha-1 chains and two beta-1 chains. As to expression, red blood cells.

In terms of biological role, involved in oxygen transport from gills to the various peripheral tissues. This is Hemoglobin subunit beta-1 from Liparis tunicatus (Kelp snailfish).